Consider the following 558-residue polypeptide: MSKENVVADSWDDADADPVKELMDKVEKVKLLQRKEEKKEAFFEKVKAEESSGVVSKLQTEEGLGPSAEEPKRVFLRRPKDGFAASENVIEASPPTSADTEEQPVTNVRSRSHHKLNQKEKQPAPTYEERQAAYQAARNRILGTEYKPDNQEIKEIKFIDRSKSPETLKMTQQNMVEHYGEELSRELMEQPAEIVPPERQYTPDFTQPPPSVSESGGVYNGPPGFQQKQPNFQPTLQQQSLHQQQYLDNQYMMQMNVQIPIQYHNQTQHQFVPHEASAISTTSQNSNGDGQNDQAIYYYQAPTQQPMNYIPYNLPNMAYPPPNFQPQGQLHHQMNAGQLHQIQQQQQQCQQIQHQPPQQHQQVINGQVMNQQNQRNQVNSYPQQNGAGRGQNRQPMMYQMPCNSGPTAKPPPLMNQMQNRCMTNNGQNYQNRNMQQQGQQRSYSSQPQNGQFYQNGNSNQNNPNNGRKQQHQPQQQQNKSGKFGQNRNDMQKNNYQPNLQQPPMSQNPIPFGCPPRNVNAIREQHANNGSPNTGAGILGPHPMMSASQWPALQQNRPQ.

Positions Lys45–Tyr146 constitute an SUZ domain. Disordered regions lie at residues Glu50 to Ala132, Phe205 to Leu241, and Gln374 to Gln558. Basic and acidic residues predominate over residues Glu69–Asp81. Polar residues predominate over residues Pro94 to Arg109. The span at Asn117–Gln131 shows a compositional bias: basic and acidic residues. Low complexity-rich tracts occupy residues Gln374–Gln394 and Asn424–Gln477. 2 stretches are compositionally biased toward polar residues: residues Asn478–Pro508 and Ser545–Gln558.

Interacts (via C-terminus) with atx-2 (via C-terminus); the interaction is RNA independent. Interacts with let-92. Phosphorylated. May be dephosphorylated by let-92.

The protein resides in the cytoplasm. The protein localises to the cytoskeleton. It is found in the microtubule organizing center. It localises to the centrosome. Its subcellular location is the centriole. The protein resides in the nucleus. The protein localises to the nucleolus. It is found in the chromosome. RNA binding protein that is required for normal cell division and cytokinesis during embryonic development. Functions with RNA-binding protein atx-2 to ensure embryonic cell division, and to this end, plays a role in the regulation of centrosome assembly, position and size, and in astral microtubule outgrowth and nucleation. Furthermore, negatively regulates the levels of the protein kinase zyg-1 at the centrosome. Also involved in ensuring centrosome attachment to the nuclear envelope. The protein is Suppressor of zyg-1 protein 20 of Caenorhabditis elegans.